A 32-amino-acid polypeptide reads, in one-letter code: DGSGGASDAQKQHDVNYLLFKVYEDVNDENSP.

This sequence belongs to the tyrosinase family. Hemocyanin subfamily. As to expression, hemolymph.

The protein resides in the secreted. It is found in the extracellular space. Hemocyanins are copper-containing oxygen carriers occurring freely dissolved in the hemolymph of many mollusks and arthropods. This is Hemocyanin C chain from Cherax destructor (Common yabby crayfish).